A 449-amino-acid polypeptide reads, in one-letter code: NADP-specific glutamate dehydrogenase (449 aa).

K125 is a catalytic residue.

The protein belongs to the Glu/Leu/Phe/Val dehydrogenases family. Homohexamer.

It carries out the reaction L-glutamate + NADP(+) + H2O = 2-oxoglutarate + NH4(+) + NADPH + H(+). This Giardia intestinalis (Giardia lamblia) protein is NADP-specific glutamate dehydrogenase.